An 88-amino-acid polypeptide reads, in one-letter code: YcgL domain-containing protein HI_1446 (88 aa).

The YcgL domain occupies 1-85 (MLCAIYKSKK…QDDGLFNSLS (85 aa)).

The chain is YcgL domain-containing protein HI_1446 from Haemophilus influenzae (strain ATCC 51907 / DSM 11121 / KW20 / Rd).